A 225-amino-acid polypeptide reads, in one-letter code: Cytidylate kinase (225 aa).

11–19 contacts ATP; that stretch reads GPAAAGKST.

Belongs to the cytidylate kinase family. Type 1 subfamily.

It localises to the cytoplasm. It catalyses the reaction CMP + ATP = CDP + ADP. The catalysed reaction is dCMP + ATP = dCDP + ADP. This is Cytidylate kinase from Bacillus cereus (strain G9842).